Reading from the N-terminus, the 210-residue chain is CASP-like protein 3A2 (210 aa).

The Cytoplasmic segment spans residues 1–45; that stretch reads MMMNGQKMAAAEVAVQLPESKMVTENIGGAAAAMRPFGRKAEVMN. A helical transmembrane segment spans residues 46-66; the sequence is VLLRVLCMVTSVAALSSMVTA. At 67–92 the chain is on the extracellular side; the sequence is QQSSTVSIYGFMLPIQSKWSFSHSFE. Residues 93–113 traverse the membrane as a helical segment; the sequence is YVVGVSAVVAAHSLLQLLISV. At 114–128 the chain is on the cytoplasmic side; that stretch reads SRLLRKSPVIQSRSH. A helical membrane pass occupies residues 129–149; sequence AWLVFAGDQVFAYAMISAGAA. Residues 150 to 178 lie on the Extracellular side of the membrane; that stretch reads ASGVTNLNRTGIRHTALPNFCKPLQSFCD. N157 carries an N-linked (GlcNAc...) asparagine glycan. Residues 179 to 199 traverse the membrane as a helical segment; it reads HVAVSIFFTFLSCFLLAASAV. Topologically, residues 200–210 are cytoplasmic; it reads QEVIWLSRSKY.

It belongs to the Casparian strip membrane proteins (CASP) family. In terms of assembly, homodimer and heterodimers.

It is found in the cell membrane. The polypeptide is CASP-like protein 3A2 (Populus trichocarpa (Western balsam poplar)).